We begin with the raw amino-acid sequence, 208 residues long: Outer-membrane lipoprotein carrier protein (208 aa).

Residues 1–22 form the signal peptide; sequence MKKIFAIAALSLPLFSHFPAFA.

This sequence belongs to the LolA family. In terms of assembly, monomer.

The protein localises to the periplasm. Participates in the translocation of lipoproteins from the inner membrane to the outer membrane. Only forms a complex with a lipoprotein if the residue after the N-terminal Cys is not an aspartate (The Asp acts as a targeting signal to indicate that the lipoprotein should stay in the inner membrane). The protein is Outer-membrane lipoprotein carrier protein of Shewanella halifaxensis (strain HAW-EB4).